A 124-amino-acid polypeptide reads, in one-letter code: MFPIASRRILLNASVLPLRLCNRNFTTTRISYNVIQDLYLRELKDTKLAPSTLQDAEGNVKPWNPPQKPNLPELELQGPEALKAYTEQNVETAHVAKESEEGESEPIEEDWLVLDDAEETKESH.

The transit peptide at Met-1–Tyr-32 directs the protein to the mitochondrion. Residues Asn-89 to His-124 form a disordered region. A compositionally biased stretch (acidic residues) spans Glu-100–His-124.

It belongs to the ATPase h subunit family. In terms of assembly, F-type ATPases have 2 components, CF(1) - the catalytic core - and CF(0) - the membrane proton channel. In yeast, the dimeric form of ATP synthase consists of 17 polypeptides: alpha, beta, gamma, delta, epsilon, 4 (B), 5 (OSCP), 6 (A), 8, 9 (C), d, E (Tim11), f, g, h, i/j and k.

It is found in the mitochondrion. The protein resides in the mitochondrion inner membrane. Functionally, mitochondrial membrane ATP synthase (F(1)F(0) ATP synthase or Complex V) produces ATP from ADP in the presence of a proton gradient across the membrane which is generated by electron transport complexes of the respiratory chain. F-type ATPases consist of two structural domains, F(1) - containing the extramembraneous catalytic core and F(0) - containing the membrane proton channel, linked together by a central stalk and a peripheral stalk. During catalysis, ATP synthesis in the catalytic domain of F(1) is coupled via a rotary mechanism of the central stalk subunits to proton translocation. Part of the complex F(0) domain. Minor subunit located with subunit a in the membrane. This Saccharomyces cerevisiae (strain ATCC 204508 / S288c) (Baker's yeast) protein is ATP synthase subunit H, mitochondrial (ATP14).